Reading from the N-terminus, the 303-residue chain is Golgi to ER traffic protein 2 (303 aa).

Over 1–168 (MSEQPLSQDE…NAYNIYQQRL (168 aa)) the chain is Cytoplasmic. The disordered stretch occupies residues 19–86 (RQAKMARGKA…DPEDDPDLMD (68 aa)). Positions 31 to 48 (RLNNILSQGSSVKGTTDP) are enriched in polar residues. A helical transmembrane segment spans residues 169-189 (WKFRFSIIRFAAVLTNFFYHY). Topologically, residues 190-216 (LTIQDYSFTSSPHFYVRALAPHPAVNS) are lumenal. A helical transmembrane segment spans residues 217–236 (FITWFSTCEVAILASFYLIT). Topologically, residues 237-280 (SKNNIYANASDGNLLLKGISMGAMVLPQLRAYQPLVIRLAHYWE) are cytoplasmic. Residues 281-301 (VFSMLLGDIFLVVVLFGLVSI) form a helical membrane-spanning segment. Topologically, residues 302–303 (YN) are lumenal.

The protein belongs to the GET2 family. Component of the Golgi to ER traffic (GET) complex, which is composed of GET1, GET2 and GET3. Within the complex, GET1 and GET2 form a heterotetramer which is stabilized by phosphatidylinositol binding and which binds to the GET3 homodimer.

The protein localises to the endoplasmic reticulum membrane. It localises to the golgi apparatus membrane. Functionally, required for the post-translational delivery of tail-anchored (TA) proteins to the endoplasmic reticulum. Together with GET1, acts as a membrane receptor for soluble GET3, which recognizes and selectively binds the transmembrane domain of TA proteins in the cytosol. The GET complex cooperates with the HDEL receptor ERD2 to mediate the ATP-dependent retrieval of resident ER proteins that contain a C-terminal H-D-E-L retention signal from the Golgi to the ER. This chain is Golgi to ER traffic protein 2, found in Debaryomyces hansenii (strain ATCC 36239 / CBS 767 / BCRC 21394 / JCM 1990 / NBRC 0083 / IGC 2968) (Yeast).